The following is a 433-amino-acid chain: Glutamate-1-semialdehyde 2,1-aminomutase (433 aa).

At Lys273 the chain carries N6-(pyridoxal phosphate)lysine.

It belongs to the class-III pyridoxal-phosphate-dependent aminotransferase family. HemL subfamily. As to quaternary structure, homodimer. Pyridoxal 5'-phosphate is required as a cofactor.

It is found in the cytoplasm. It carries out the reaction (S)-4-amino-5-oxopentanoate = 5-aminolevulinate. The protein operates within porphyrin-containing compound metabolism; protoporphyrin-IX biosynthesis; 5-aminolevulinate from L-glutamyl-tRNA(Glu): step 2/2. Its pathway is porphyrin-containing compound metabolism; chlorophyll biosynthesis. This is Glutamate-1-semialdehyde 2,1-aminomutase from Crocosphaera subtropica (strain ATCC 51142 / BH68) (Cyanothece sp. (strain ATCC 51142)).